The chain runs to 429 residues: 3-phosphoshikimate 1-carboxyvinyltransferase (429 aa).

Positions 22, 23, and 27 each coordinate 3-phosphoshikimate. Residue K22 participates in phosphoenolpyruvate binding. Positions 94 and 122 each coordinate phosphoenolpyruvate. 3-phosphoshikimate-binding residues include S167, Q169, D315, and K342. Phosphoenolpyruvate is bound at residue Q169. Residue D315 is the Proton acceptor of the active site. 2 residues coordinate phosphoenolpyruvate: R346 and R388.

This sequence belongs to the EPSP synthase family. In terms of assembly, monomer.

It is found in the cytoplasm. It catalyses the reaction 3-phosphoshikimate + phosphoenolpyruvate = 5-O-(1-carboxyvinyl)-3-phosphoshikimate + phosphate. Its pathway is metabolic intermediate biosynthesis; chorismate biosynthesis; chorismate from D-erythrose 4-phosphate and phosphoenolpyruvate: step 6/7. Catalyzes the transfer of the enolpyruvyl moiety of phosphoenolpyruvate (PEP) to the 5-hydroxyl of shikimate-3-phosphate (S3P) to produce enolpyruvyl shikimate-3-phosphate and inorganic phosphate. The protein is 3-phosphoshikimate 1-carboxyvinyltransferase of Geotalea daltonii (strain DSM 22248 / JCM 15807 / FRC-32) (Geobacter daltonii).